The following is a 293-amino-acid chain: Acetyl-coenzyme A carboxylase carboxyl transferase subunit beta (293 aa).

The region spanning 29-293 (LWRKCPRCEG…MGWPPLALDD (265 aa)) is the CoA carboxyltransferase N-terminal domain. Cysteine 33, cysteine 36, cysteine 52, and cysteine 55 together coordinate Zn(2+). The C4-type zinc finger occupies 33-55 (CPRCEGVVYRPELDRNMDVCPKC).

Belongs to the AccD/PCCB family. Acetyl-CoA carboxylase is a heterohexamer composed of biotin carboxyl carrier protein (AccB), biotin carboxylase (AccC) and two subunits each of ACCase subunit alpha (AccA) and ACCase subunit beta (AccD). It depends on Zn(2+) as a cofactor.

Its subcellular location is the cytoplasm. The catalysed reaction is N(6)-carboxybiotinyl-L-lysyl-[protein] + acetyl-CoA = N(6)-biotinyl-L-lysyl-[protein] + malonyl-CoA. It participates in lipid metabolism; malonyl-CoA biosynthesis; malonyl-CoA from acetyl-CoA: step 1/1. Component of the acetyl coenzyme A carboxylase (ACC) complex. Biotin carboxylase (BC) catalyzes the carboxylation of biotin on its carrier protein (BCCP) and then the CO(2) group is transferred by the transcarboxylase to acetyl-CoA to form malonyl-CoA. The sequence is that of Acetyl-coenzyme A carboxylase carboxyl transferase subunit beta from Alcanivorax borkumensis (strain ATCC 700651 / DSM 11573 / NCIMB 13689 / SK2).